The chain runs to 271 residues: Formamidopyrimidine-DNA glycosylase (271 aa).

The active-site Schiff-base intermediate with DNA is the P2. Catalysis depends on E3, which acts as the Proton donor. Catalysis depends on K57, which acts as the Proton donor; for beta-elimination activity. 3 residues coordinate DNA: H90, R109, and K151. The FPG-type zinc finger occupies 236–270; it reads HVYGRGGETCTQCGNLLSEIRLGQRTTVFCSICQP. R260 functions as the Proton donor; for delta-elimination activity in the catalytic mechanism.

It belongs to the FPG family. In terms of assembly, monomer. The cofactor is Zn(2+).

It carries out the reaction Hydrolysis of DNA containing ring-opened 7-methylguanine residues, releasing 2,6-diamino-4-hydroxy-5-(N-methyl)formamidopyrimidine.. The catalysed reaction is 2'-deoxyribonucleotide-(2'-deoxyribose 5'-phosphate)-2'-deoxyribonucleotide-DNA = a 3'-end 2'-deoxyribonucleotide-(2,3-dehydro-2,3-deoxyribose 5'-phosphate)-DNA + a 5'-end 5'-phospho-2'-deoxyribonucleoside-DNA + H(+). Functionally, involved in base excision repair of DNA damaged by oxidation or by mutagenic agents. Acts as a DNA glycosylase that recognizes and removes damaged bases. Has a preference for oxidized purines, such as 7,8-dihydro-8-oxoguanine (8-oxoG). Has AP (apurinic/apyrimidinic) lyase activity and introduces nicks in the DNA strand. Cleaves the DNA backbone by beta-delta elimination to generate a single-strand break at the site of the removed base with both 3'- and 5'-phosphates. The protein is Formamidopyrimidine-DNA glycosylase of Shewanella oneidensis (strain ATCC 700550 / JCM 31522 / CIP 106686 / LMG 19005 / NCIMB 14063 / MR-1).